The chain runs to 409 residues: Peptidase T (409 aa).

Position 78 (His78) interacts with Zn(2+). The active site involves Asp80. Position 140 (Asp140) interacts with Zn(2+). Glu173 acts as the Proton acceptor in catalysis. Zn(2+) is bound by residues Glu174, Asp196, and His379.

Belongs to the peptidase M20B family. The cofactor is Zn(2+).

The protein localises to the cytoplasm. The enzyme catalyses Release of the N-terminal residue from a tripeptide.. Cleaves the N-terminal amino acid of tripeptides. In Salmonella enteritidis PT4 (strain P125109), this protein is Peptidase T.